The following is a 616-amino-acid chain: Chaperone protein DnaK (616 aa).

Thr-174 carries the post-translational modification Phosphothreonine; by autocatalysis. Residues 575 to 616 (QQTQGAQSDPGAAGFGGQQEAPGAGQDENVVDADYKVVDDDK) are disordered. The segment covering 607–616 (ADYKVVDDDK) has biased composition (basic and acidic residues).

Belongs to the heat shock protein 70 family.

In terms of biological role, acts as a chaperone. The sequence is that of Chaperone protein DnaK from Ruminiclostridium cellulolyticum (strain ATCC 35319 / DSM 5812 / JCM 6584 / H10) (Clostridium cellulolyticum).